Reading from the N-terminus, the 503-residue chain is Glutamate/gamma-aminobutyrate antiporter (503 aa).

33–43 (LHLVFFLLLGG) is a binding site for L-glutamate. The next 7 membrane-spanning stretches (helical) occupy residues 35-55 (LVFF…LCAA), 153-173 (FVVG…AYFI), 194-214 (VSTL…EASA), 232-252 (ILLV…VAAV), 366-386 (LTVV…FVLI), 407-427 (IIAG…FVPP), and 440-460 (MILL…YELH).

It belongs to the amino acid-polyamine-organocation (APC) superfamily. Glutamate:GABA antiporter (GGA) (TC 2.A.3.7) family.

It is found in the cell membrane. It carries out the reaction 4-aminobutanoate(in) + L-glutamate(out) = 4-aminobutanoate(out) + L-glutamate(in). Functionally, involved in glutaminase-dependent acid resistance. Exchanges extracellular glutamate (Glu) for intracellular gamma-aminobutyric acid (GABA) under acidic conditions. This Lactococcus lactis subsp. cremoris (strain MG1363) protein is Glutamate/gamma-aminobutyrate antiporter.